A 152-amino-acid polypeptide reads, in one-letter code: CMT1A duplicated region transcript 4 protein (152 aa).

A compositionally biased stretch (basic and acidic residues) spans 1 to 11 (MDARRMKKEEG). Disordered regions lie at residues 1–23 (MDARRMKKEEGLTENTGLPRKLL) and 60–89 (ERPWASRQNKPSSVIQPKRRKSSKSSGKAV). A compositionally biased stretch (polar residues) spans 65-74 (SRQNKPSSVI).

As to expression, expressed in fetal skeletal muscle and kidney.

This chain is CMT1A duplicated region transcript 4 protein (CDRT4), found in Homo sapiens (Human).